Consider the following 888-residue polypeptide: Dilute domain-containing protein YPR089W (888 aa).

Residues 360-745 (DIVLQSYWLS…KKFLNNKIKD (386 aa)) enclose the Dilute domain. Disordered regions lie at residues 462-504 (KEQQ…NNSS), 805-827 (KQRQ…TGDE), and 865-888 (LNIP…QNPW). 2 stretches are compositionally biased toward polar residues: residues 809–823 (NEPQ…TSDF) and 867–880 (IPSS…WSNN).

It is found in the golgi apparatus. The sequence is that of Dilute domain-containing protein YPR089W from Saccharomyces cerevisiae (strain ATCC 204508 / S288c) (Baker's yeast).